Consider the following 246-residue polypeptide: Homeobox protein SIX6 (246 aa).

Residues 126-186 (WDGEQKTHCF…KNRRQRDRAA (61 aa)) constitute a DNA-binding region (homeobox). Residues 190–246 (NRLQQQVLSQGPGRVLRSEGEGTPEVLGVASSPAASLSSKAATSAISITSSDSECDI) form a disordered region. Position 212 is a phosphothreonine (T212). Positions 219 to 246 (ASSPAASLSSKAATSAISITSSDSECDI) are enriched in low complexity. S221, S225, S227, and S228 each carry phosphoserine.

The protein belongs to the SIX/Sine oculis homeobox family. In terms of assembly, interacts with TLE4 and TLE5. In terms of tissue distribution, in the developing embryo, expressed mainly in the ventral optic stalk, optic chiasma, the neural retina and the primordial tissues that give rise to the pituitary/hypothalamus axis. Not expressed in the lens placode.

The protein localises to the nucleus. May be involved in eye development. The protein is Homeobox protein SIX6 (Six6) of Mus musculus (Mouse).